Reading from the N-terminus, the 814-residue chain is Phosphatidylinositol 3-kinase VPS34 (814 aa).

One can recognise a C2 PI3K-type domain in the interval 25–177; that stretch reads LDGNLPVKKS…EKLMNKYERG (153 aa). Positions 274–449 constitute a PIK helical domain; sequence DRDLKPSNIE…YSTYELLEEN (176 aa). The PI3K/PI4K catalytic domain maps to 532-799; the sequence is VAGESSLFKS…LINESVSALF (268 aa). The tract at residues 538 to 544 is G-loop; the sequence is LFKSALH. Positions 668–676 are catalytic loop; the sequence is GIGDRHLDN. Residues 687–708 are activation loop; sequence HVDFAFILGRDPKPFPPPMKLC.

It belongs to the PI3/PI4-kinase family. Interacts with VPS15. Component of a complex made of VPS38/USL1 and PI3K main subunits such as VPS15, ATG6/VPS30 and VPS34. Binds directly to VPS38/USL1.

The enzyme catalyses a 1,2-diacyl-sn-glycero-3-phospho-(1D-myo-inositol) + ATP = a 1,2-diacyl-sn-glycero-3-phospho-(1D-myo-inositol-3-phosphate) + ADP + H(+). Its activity is regulated as follows. The PI3K inhibitor LY294002 affects phosphatidylinositol 3-phosphate (PI3P) levels and triggers a decrease in proline, hydrophobic and aromatic amino acids, and sugars (e.g. raffinose) accumulation in response to salt treatment correlated with lower P5CS1 expression and higher ProDH1 expression, genes involved in proline biosynthesis and catabolism, respectively. Involved in the negative regulation of proline, hydrophobic and aromatic amino acids accumulation, especially in response to salt (NaCl), either through inhibition of their synthesis and/or promotion of their catabolism. Triggers defense responses (e.g. pathogenesis related (PR1 and PR5) gene expression and hydrogen peroxide H(2)O(2) burst) to the bacterial pathogen compatible Pseudomonas syringae pv tomato DC3000 (Pst DC3000) and incompatible Pst DC3000 (avrRpt2), by regulating reactive ogygen species (ROS) production and by promoting stomatal closure. This Arabidopsis thaliana (Mouse-ear cress) protein is Phosphatidylinositol 3-kinase VPS34.